Consider the following 333-residue polypeptide: Probable cytosolic iron-sulfur protein assembly protein CIAO1 homolog (333 aa).

7 WD repeats span residues 22-61 (APYD…KWGL), 67-106 (GHEK…LEFT), 113-152 (GHTY…DFEC), 158-197 (GHGQ…WECI), 202-241 (GHES…EKWI), 249-288 (ENSR…TPDK), and 298-333 (AHDS…LQDK).

The protein belongs to the WD repeat CIA1 family.

Essential component of the cytosolic iron-sulfur (Fe/S) protein assembly machinery. Required for the maturation of extramitochondrial Fe/S proteins. The chain is Probable cytosolic iron-sulfur protein assembly protein CIAO1 homolog (ciao1) from Dictyostelium discoideum (Social amoeba).